Here is a 315-residue protein sequence, read N- to C-terminus: Vomeronasal type-1 receptor 54 (315 aa).

Topologically, residues 1-15 are extracellular; it reads MNKMNRLSHNTEIRN. A helical transmembrane segment spans residues 16–40; the sequence is AIYSGVGIGISGNSFLLLFHIFKYI. The Cytoplasmic portion of the chain corresponds to 41 to 51; it reads RGQRSRHIDLP. The chain crosses the membrane as a helical span at residues 52 to 71; it reads IGLLSLIHLVMLIAMSLVAT. Over 72 to 90 the chain is Extracellular; it reads DIFMPWGRWGDTTCKCVIS. The cysteines at positions 85 and 172 are disulfide-linked. Residues 91–112 traverse the membrane as a helical segment; sequence LYRFCRSLSLCATSLLSILQAV. Residues 113 to 132 lie on the Cytoplasmic side of the membrane; it reads TLNPRNSCLEKFKRKSPHYM. Residues 133–154 form a helical membrane-spanning segment; that stretch reads LGCLLFLSVFYTFISSPLATYI. Over 155-193 the chain is Extracellular; that stretch reads TAKSNLTSPSFTYITTSCSLAPMSYSFHLTVFILLTSRD. Residues 194-212 form a helical membrane-spanning segment; it reads VIFVGLMLLSSGYMVTFLG. The Cytoplasmic portion of the chain corresponds to 213–239; the sequence is RHKKQSQFLHITSFSLKPSAEKRAMRT. Residues 240–260 form a helical membrane-spanning segment; sequence ILCLMSFFVLMYTLDSIVSYI. The Extracellular segment spans residues 261-267; it reads RSIDDGQ. Residues 268-288 form a helical membrane-spanning segment; sequence IFYCVHIFTAHGYATVSPFLI. Topologically, residues 289 to 315 are cytoplasmic; the sequence is LSTEKYIINIFRSTFGRMVTIILLRNR.

The protein belongs to the G-protein coupled receptor 1 family.

Its subcellular location is the cell membrane. Its function is as follows. Putative pheromone receptor implicated in the regulation of social and reproductive behavior. This chain is Vomeronasal type-1 receptor 54 (Vmn1r54), found in Mus musculus (Mouse).